The following is a 362-amino-acid chain: Protein-glutamate methylesterase/protein-glutamine glutaminase 1 (362 aa).

In terms of domain architecture, Response regulatory spans 10-127 (RVLVVDDSSF…ADAQRVFREE (118 aa)). 4-aspartylphosphate is present on D61. The CheB-type methylesterase domain occupies 163–357 (PRPSQALAGK…LPLTQIGSEI (195 aa)). Residues S181, H208, and D306 contribute to the active site.

It belongs to the CheB family. Phosphorylated by CheA. Phosphorylation of the N-terminal regulatory domain activates the methylesterase activity.

It localises to the cytoplasm. The enzyme catalyses [protein]-L-glutamate 5-O-methyl ester + H2O = L-glutamyl-[protein] + methanol + H(+). It catalyses the reaction L-glutaminyl-[protein] + H2O = L-glutamyl-[protein] + NH4(+). Involved in chemotaxis. Part of a chemotaxis signal transduction system that modulates chemotaxis in response to various stimuli. Catalyzes the demethylation of specific methylglutamate residues introduced into the chemoreceptors (methyl-accepting chemotaxis proteins or MCP) by CheR. Also mediates the irreversible deamidation of specific glutamine residues to glutamic acid. The chain is Protein-glutamate methylesterase/protein-glutamine glutaminase 1 from Geobacter sulfurreducens (strain ATCC 51573 / DSM 12127 / PCA).